The primary structure comprises 520 residues: UBX domain-containing protein 11 (520 aa).

Positions 1–26 (MSSPLASLSKTRKVPLPSEPMNPGRR) are disordered. Residues 76-149 (MAFMTRKLWD…VREMERFLSD (74 aa)) adopt a coiled-coil conformation. The SEP domain occupies 230 to 294 (LEPIPLKLYR…VSDLRNQVYL (65 aa)). Positions 392-469 (PAPPLSMLRI…GLVPKAALLL (78 aa)) constitute a UBX domain. Residues 476-520 (KSSLKFSPGPCPGPGPGPSPGPGPGPSPGPGPGPSPCPGPSPSPQ) are disordered. The segment covering 484 to 520 (GPCPGPGPGPSPGPGPGPSPGPGPGPSPCPGPSPSPQ) has biased composition (pro residues). Repeat copies occupy residues 487–494 (PGPGPGPS), 495–502 (PGPGPGPS), and 503–510 (PGPGPGPS). Positions 487-510 (PGPGPGPSPGPGPGPSPGPGPGPS) are 3 X 8 AA tandem repeats of P-G-P-G-P-G-P-S.

As to quaternary structure, interacts with GNA12, GNA13, RND1, RND2 and RND3.

Its subcellular location is the cytoplasm. The protein localises to the cytoskeleton. Functionally, may be involved in the reorganization of actin cytoskeleton mediated by RND1, RND2 and RND3. Promotes RHOA activation mediated by GNA12 and GNA13. The sequence is that of UBX domain-containing protein 11 (UBXN11) from Homo sapiens (Human).